A 34-amino-acid polypeptide reads, in one-letter code: Beta/mu-theraphotoxin-Pe1a (34 aa).

3 disulfides stabilise this stretch: cysteine 2–cysteine 16, cysteine 9–cysteine 21, and cysteine 15–cysteine 28.

It belongs to the neurotoxin 10 (Hwtx-1) family. 54 (ProTx-1) subfamily. Expressed by the venom gland.

The protein resides in the secreted. Functionally, ion channel impairing toxin that inhibits voltage-gated sodium channels. The recombinantly expressed toxin shows a weak activity against Nav1.7/SCN9A (25% inhibition at 10 uM), and shifts the voltage dependence of channel activation to more depolarized potentials. In Phormingochilus everetti (Malaysian purple earth tiger tarantula), this protein is Beta/mu-theraphotoxin-Pe1a.